Reading from the N-terminus, the 362-residue chain is Epoxide hydrolase 4 (362 aa).

A helical; Signal-anchor for type II membrane protein membrane pass occupies residues 17–37 (SLLFWSLVYCYCGLCASIHLL). Residues 94–211 (PLMLLLHGFP…EYILRHPAQL (118 aa)) form the AB hydrolase-1 domain. The active-site Nucleophile is Asp-169. The active-site Proton donor is Tyr-281. Catalysis depends on His-336, which acts as the Proton acceptor.

The protein belongs to the AB hydrolase superfamily. Epoxide hydrolase family.

The protein resides in the membrane. This chain is Epoxide hydrolase 4 (EPHX4), found in Homo sapiens (Human).